The chain runs to 212 residues: MRDPVETYMNLVPMVVEQTNRGERAYDIFSRLLKERIIFVTGPVEDGMSTLIVAQLLFLEAENPKKEISMYINSPGGVVTSGLAIYDTMQFIRPPVSTLCTGQAASMGSLLLAAGHKDMRFSLPNARIMVHQPSGGFQGQATDIMLHAQEILNLKKRLNEIYVHHTGQTYKAIEDALERDKFLTAEMAREFGIVDKVIEKRPEDPAPAPKAA.

The Nucleophile role is filled by serine 106. Histidine 131 is a catalytic residue.

It belongs to the peptidase S14 family. In terms of assembly, fourteen ClpP subunits assemble into 2 heptameric rings which stack back to back to give a disk-like structure with a central cavity, resembling the structure of eukaryotic proteasomes.

It localises to the cytoplasm. The enzyme catalyses Hydrolysis of proteins to small peptides in the presence of ATP and magnesium. alpha-casein is the usual test substrate. In the absence of ATP, only oligopeptides shorter than five residues are hydrolyzed (such as succinyl-Leu-Tyr-|-NHMec, and Leu-Tyr-Leu-|-Tyr-Trp, in which cleavage of the -Tyr-|-Leu- and -Tyr-|-Trp bonds also occurs).. Its function is as follows. Cleaves peptides in various proteins in a process that requires ATP hydrolysis. Has a chymotrypsin-like activity. Plays a major role in the degradation of misfolded proteins. The sequence is that of ATP-dependent Clp protease proteolytic subunit from Rhodopseudomonas palustris (strain ATCC BAA-98 / CGA009).